The chain runs to 1207 residues: DNA-directed RNA polymerase subunit beta' (1207 aa).

Residues C60, C62, C75, and C78 each coordinate Zn(2+). 3 residues coordinate Mg(2+): D449, D451, and D453. 4 residues coordinate Zn(2+): C822, C896, C903, and C906.

It belongs to the RNA polymerase beta' chain family. As to quaternary structure, the RNAP catalytic core consists of 2 alpha, 1 beta, 1 beta' and 1 omega subunit. When a sigma factor is associated with the core the holoenzyme is formed, which can initiate transcription. Mg(2+) is required as a cofactor. It depends on Zn(2+) as a cofactor.

The catalysed reaction is RNA(n) + a ribonucleoside 5'-triphosphate = RNA(n+1) + diphosphate. Its function is as follows. DNA-dependent RNA polymerase catalyzes the transcription of DNA into RNA using the four ribonucleoside triphosphates as substrates. This chain is DNA-directed RNA polymerase subunit beta', found in Staphylococcus epidermidis (strain ATCC 35984 / DSM 28319 / BCRC 17069 / CCUG 31568 / BM 3577 / RP62A).